Consider the following 213-residue polypeptide: Large ribosomal subunit protein mL67 (213 aa).

This sequence belongs to the mitochondrion-specific ribosomal protein mL67 family.

It is found in the nucleus. Its subcellular location is the mitochondrion. Functionally, transcription factor involved in regulation of RNA polymerase II-dependent transcription. Also involved in regulation of mitochondrial DNA recombination, maintenance and repair, and generation of homoplasmic cells. This is Large ribosomal subunit protein mL67 (MHR1) from Eremothecium gossypii (strain ATCC 10895 / CBS 109.51 / FGSC 9923 / NRRL Y-1056) (Yeast).